The chain runs to 420 residues: Gamma-glutamyl phosphate reductase (420 aa).

It belongs to the gamma-glutamyl phosphate reductase family.

It is found in the cytoplasm. The catalysed reaction is L-glutamate 5-semialdehyde + phosphate + NADP(+) = L-glutamyl 5-phosphate + NADPH + H(+). It participates in amino-acid biosynthesis; L-proline biosynthesis; L-glutamate 5-semialdehyde from L-glutamate: step 2/2. Functionally, catalyzes the NADPH-dependent reduction of L-glutamate 5-phosphate into L-glutamate 5-semialdehyde and phosphate. The product spontaneously undergoes cyclization to form 1-pyrroline-5-carboxylate. The polypeptide is Gamma-glutamyl phosphate reductase (Streptococcus sanguinis (strain SK36)).